Consider the following 137-residue polypeptide: Nucleoside diphosphate kinase (137 aa).

Positions 9, 57, 85, 91, and 102 each coordinate ATP. His-119 serves as the catalytic Pros-phosphohistidine intermediate.

The protein belongs to the NDK family. Homotetramer. It depends on Mg(2+) as a cofactor.

The protein resides in the cytoplasm. It carries out the reaction a 2'-deoxyribonucleoside 5'-diphosphate + ATP = a 2'-deoxyribonucleoside 5'-triphosphate + ADP. The enzyme catalyses a ribonucleoside 5'-diphosphate + ATP = a ribonucleoside 5'-triphosphate + ADP. Major role in the synthesis of nucleoside triphosphates other than ATP. The ATP gamma phosphate is transferred to the NDP beta phosphate via a ping-pong mechanism, using a phosphorylated active-site intermediate. The polypeptide is Nucleoside diphosphate kinase (Streptococcus thermophilus (strain CNRZ 1066)).